A 129-amino-acid polypeptide reads, in one-letter code: Virion-associated protein (129 aa).

Coiled-coil stretches lie at residues 1–31 (MANL…ILEM) and 38–59 (IKES…LIND). Residues 122 to 129 (PAGWPNQF) form a capsid binding region.

The protein belongs to the caulimovirus ORF III family. As to quaternary structure, homotetramer, through coiled-coil domain. Homotrimer when interacts with icosehadral capsid. Interacts with capsid protein, and with Movement protein.

It is found in the virion. Its subcellular location is the host cell junction. The protein resides in the host plasmodesma. In terms of biological role, plays a role in virus cell-to-cell and plant-to-plant transmission. Interacts with virion icosahedral capsid and movement protein, thereby facilitating virion cell-to-cell transmission through plasmodesmata opened by viral movement protein. Also interacts with aphid transmission factor, attaching the virion to aphid stylet when the animal feeds on an virus infected plant. Aphid saliva may later detach the virion, inducing release of infectious particles when the animal feeds on a new plant. The protein is Virion-associated protein of Arabidopsis thaliana (Mouse-ear cress).